The sequence spans 202 residues: ATP-dependent Clp protease proteolytic subunit (202 aa).

Ser106 functions as the Nucleophile in the catalytic mechanism. The active site involves His131.

This sequence belongs to the peptidase S14 family. Fourteen ClpP subunits assemble into 2 heptameric rings which stack back to back to give a disk-like structure with a central cavity, resembling the structure of eukaryotic proteasomes.

The protein resides in the cytoplasm. It carries out the reaction Hydrolysis of proteins to small peptides in the presence of ATP and magnesium. alpha-casein is the usual test substrate. In the absence of ATP, only oligopeptides shorter than five residues are hydrolyzed (such as succinyl-Leu-Tyr-|-NHMec, and Leu-Tyr-Leu-|-Tyr-Trp, in which cleavage of the -Tyr-|-Leu- and -Tyr-|-Trp bonds also occurs).. Cleaves peptides in various proteins in a process that requires ATP hydrolysis. Has a chymotrypsin-like activity. Plays a major role in the degradation of misfolded proteins. The polypeptide is ATP-dependent Clp protease proteolytic subunit (Variovorax paradoxus (strain S110)).